Consider the following 614-residue polypeptide: Elongation factor 4 (614 aa).

The tr-type G domain occupies 10-192 (ALIRNFCIIA…EIVARIPPPV (183 aa)). GTP contacts are provided by residues 22–27 (DHGKST) and 139–142 (NKID).

The protein belongs to the TRAFAC class translation factor GTPase superfamily. Classic translation factor GTPase family. LepA subfamily.

The protein localises to the cell membrane. It carries out the reaction GTP + H2O = GDP + phosphate + H(+). Required for accurate and efficient protein synthesis under certain stress conditions. May act as a fidelity factor of the translation reaction, by catalyzing a one-codon backward translocation of tRNAs on improperly translocated ribosomes. Back-translocation proceeds from a post-translocation (POST) complex to a pre-translocation (PRE) complex, thus giving elongation factor G a second chance to translocate the tRNAs correctly. Binds to ribosomes in a GTP-dependent manner. The polypeptide is Elongation factor 4 (Thermobifida fusca (strain YX)).